A 391-amino-acid chain; its full sequence is MGWRACLRPEASGAVQGRWLGAVLSGLCLLSALAFLEWLGSPTETAWNAAQGNVDAPDVGGSTPQVPSLLSMLVTRRRRYTLTPARLRWDHFNLTYRILSFPRNLLSPEETRRGLAAAFRMWSDVSPFSFREVAPERPSDLKIGFYPVNHTDCLVSALHHCFDGPTGELAHAFFPPHGGIHFDDSEYWVLGPTRYSWKKGVWLTDLVHVAAHEIGHALGLMHSQQDQALMHLNATLRGWKALSQDELWGLHRLYGCLDRIFVCTSWARKGFCDVRQRLMKRLCPRSCDFCYEFPFPTVATTTSPTRTKTRFVREGRNMTFHCGQKILHKKGKVYWYKDQEPLEFSYPGYLALGEARLSIIANAVNEGTYTCVVRHRQRVLTTYSWRVRVRS.

Residues 1–19 lie on the Cytoplasmic side of the membrane; it reads MGWRACLRPEASGAVQGRW. The propeptide occupies 1-79; it reads MGWRACLRPE…LSMLVTRRRR (79 aa). The chain crosses the membrane as a helical; Signal-anchor for type II membrane protein span at residues 20-38; the sequence is LGAVLSGLCLLSALAFLEW. The Lumenal segment spans residues 39–391; the sequence is LGSPTETAWN…TYSWRVRVRS (353 aa). Residues N93 and N149 are each glycosylated (N-linked (GlcNAc...) asparagine). Residue H212 participates in Zn(2+) binding. Residue E213 is part of the active site. Zn(2+) contacts are provided by H216 and H222. A glycan (N-linked (GlcNAc...) asparagine) is linked at N233. Residues 256-290 enclose the ShKT domain; it reads CLDRIFVCTSWARKGFCDVRQRLMKRLCPRSCDFC. 3 disulfide bridges follow: C256–C290, C263–C283, and C272–C287. The Ig-like C2-type domain occupies 296 to 381; that stretch reads PTVATTTSPT…VVRHRQRVLT (86 aa). N-linked (GlcNAc...) asparagine glycosylation is present at N317. A disulfide bridge connects residues C322 and C371.

It belongs to the peptidase M10A family. Zn(2+) serves as cofactor. In terms of processing, N-glycosylated. Post-translationally, proteolytic cleavage might yield an active form. In terms of tissue distribution, expressed at the highest levels in ovary and uterus. In ovary expression is strictly confined to granulosa cells of preantral and small antral follicles. Detected also in testis and prostate.

It localises to the membrane. The protein localises to the endoplasmic reticulum membrane. With respect to regulation, inhibited by TIMP2. In terms of biological role, protease. May regulate the surface expression of some potassium channels by retaining them in the endoplasmic reticulum. This Rattus norvegicus (Rat) protein is Matrix metalloproteinase-23 (Mmp23).